The chain runs to 151 residues: uncharacterized protein (151 aa).

Residues 2 to 133 form the Response regulatory domain; the sequence is KTLIVEDNPK…VFVEAVHYSQ (132 aa). 4-aspartylphosphate is present on Asp53.

This is an uncharacterized protein from Sinorhizobium fredii (strain NBRC 101917 / NGR234).